The following is a 94-amino-acid chain: Phosphoribosyl-ATP pyrophosphatase (94 aa).

It belongs to the PRA-PH family.

It localises to the cytoplasm. The catalysed reaction is 1-(5-phospho-beta-D-ribosyl)-ATP + H2O = 1-(5-phospho-beta-D-ribosyl)-5'-AMP + diphosphate + H(+). It functions in the pathway amino-acid biosynthesis; L-histidine biosynthesis; L-histidine from 5-phospho-alpha-D-ribose 1-diphosphate: step 2/9. In Pyrobaculum neutrophilum (strain DSM 2338 / JCM 9278 / NBRC 100436 / V24Sta) (Thermoproteus neutrophilus), this protein is Phosphoribosyl-ATP pyrophosphatase.